The following is a 745-amino-acid chain: Elongation factor G, mitochondrial (745 aa).

A mitochondrion-targeting transit peptide spans 1 to 15; it reads MSLITRLLTASSPLR. In terms of domain architecture, tr-type G spans 40 to 317; sequence DKIRNIGISA…AVLEYLPNPG (278 aa). GTP-binding positions include 49 to 56, 116 to 120, and 170 to 173; these read AHIDSGKT, DTPGH, and NKLD.

It belongs to the TRAFAC class translation factor GTPase superfamily. Classic translation factor GTPase family. EF-G/EF-2 subfamily.

Its subcellular location is the mitochondrion. Its pathway is protein biosynthesis; polypeptide chain elongation. Functionally, mitochondrial GTPase that catalyzes the GTP-dependent ribosomal translocation step during translation elongation. During this step, the ribosome changes from the pre-translocational (PRE) to the post-translocational (POST) state as the newly formed A-site-bound peptidyl-tRNA and P-site-bound deacylated tRNA move to the P and E sites, respectively. Catalyzes the coordinated movement of the two tRNA molecules, the mRNA and conformational changes in the ribosome. Essential during development as it acts as a retrograde signal from mitochondria to the nucleus to slow down cell proliferation if mitochondrial energy output is low. In Drosophila ananassae (Fruit fly), this protein is Elongation factor G, mitochondrial (ico).